A 234-amino-acid chain; its full sequence is Endonuclease V (234 aa).

2 residues coordinate Mg(2+): D46 and D116.

Belongs to the endonuclease V family. Mg(2+) serves as cofactor.

It localises to the cytoplasm. It catalyses the reaction Endonucleolytic cleavage at apurinic or apyrimidinic sites to products with a 5'-phosphate.. In terms of biological role, DNA repair enzyme involved in the repair of deaminated bases. Selectively cleaves double-stranded DNA at the second phosphodiester bond 3' to a deoxyinosine leaving behind the intact lesion on the nicked DNA. The polypeptide is Endonuclease V (Clostridium acetobutylicum (strain ATCC 824 / DSM 792 / JCM 1419 / IAM 19013 / LMG 5710 / NBRC 13948 / NRRL B-527 / VKM B-1787 / 2291 / W)).